The sequence spans 467 residues: Abscisic acid 8'-hydroxylase 1 (467 aa).

Residues 5–24 form a helical membrane-spanning segment; the sequence is ALFLTLFAGSLFLYFLRCLI. Residue Cys411 participates in heme binding.

Belongs to the cytochrome P450 family. It depends on heme as a cofactor. In terms of tissue distribution, mainly expressed in flowers, siliques, roots and stems. Lower expression in rosette leaves and dry seeds. Expressed in vascular tissues of embryo during the seed development.

It localises to the membrane. It carries out the reaction 2-cis-(+)-abscisate + reduced [NADPH--hemoprotein reductase] + O2 = (+)-8'-hydroxyabscisate + oxidized [NADPH--hemoprotein reductase] + H2O + H(+). Its pathway is plant hormone degradation; abscisic acid degradation. In terms of biological role, involved in the oxidative degradation of abscisic acid. Plays an important role in determining abscisic acid levels in dry seeds and in the control of postgermination growth. This Arabidopsis thaliana (Mouse-ear cress) protein is Abscisic acid 8'-hydroxylase 1 (CYP707A1).